A 243-amino-acid polypeptide reads, in one-letter code: 1-(5-phosphoribosyl)-5-[(5-phosphoribosylamino)methylideneamino] imidazole-4-carboxamide isomerase (243 aa).

The active-site Proton acceptor is the Asp-8. Asp-130 (proton donor) is an active-site residue.

It belongs to the HisA/HisF family.

The protein localises to the cytoplasm. It carries out the reaction 1-(5-phospho-beta-D-ribosyl)-5-[(5-phospho-beta-D-ribosylamino)methylideneamino]imidazole-4-carboxamide = 5-[(5-phospho-1-deoxy-D-ribulos-1-ylimino)methylamino]-1-(5-phospho-beta-D-ribosyl)imidazole-4-carboxamide. It participates in amino-acid biosynthesis; L-histidine biosynthesis; L-histidine from 5-phospho-alpha-D-ribose 1-diphosphate: step 4/9. The polypeptide is 1-(5-phosphoribosyl)-5-[(5-phosphoribosylamino)methylideneamino] imidazole-4-carboxamide isomerase (Vesicomyosocius okutanii subsp. Calyptogena okutanii (strain HA)).